The primary structure comprises 556 residues: Threonylcarbamoyladenosine tRNA methylthiotransferase (556 aa).

The disordered stretch occupies residues 17–57 (SATDPKPHDRQSARKNIVPRARKRNKNNIQEEEPPADSTIP). The 109-residue stretch at 60-168 (QKIWIRTWGC…VVEVVEETIK (109 aa)) folds into the MTTase N-terminal domain. Cys69, Cys105, Cys134, Cys210, Cys214, and Cys217 together coordinate [4Fe-4S] cluster. Residues 196–427 (RKNPLIEIIS…QLFHSYDPYD (232 aa)) form the Radical SAM core domain. In terms of domain architecture, TRAM spans 427 to 489 (DHKIGQKQQV…KHFMKGQPVQ (63 aa)). The helical transmembrane segment at 536 to 556 (VFLFLTALLAAVIAFVGTKLV) threads the bilayer.

This sequence belongs to the methylthiotransferase family. CDKAL1 subfamily. Requires [4Fe-4S] cluster as cofactor.

It localises to the endoplasmic reticulum membrane. It carries out the reaction N(6)-L-threonylcarbamoyladenosine(37) in tRNA + (sulfur carrier)-SH + AH2 + 2 S-adenosyl-L-methionine = 2-methylsulfanyl-N(6)-L-threonylcarbamoyladenosine(37) in tRNA + (sulfur carrier)-H + 5'-deoxyadenosine + L-methionine + A + S-adenosyl-L-homocysteine + 2 H(+). Its function is as follows. Catalyzes the methylthiolation of N6-threonylcarbamoyladenosine (t(6)A), leading to the formation of 2-methylthio-N6-threonylcarbamoyladenosine (ms(2)t(6)A) at position 37 in tRNAs that read codons beginning with adenine. The chain is Threonylcarbamoyladenosine tRNA methylthiotransferase (cdkal1) from Xenopus laevis (African clawed frog).